A 143-amino-acid chain; its full sequence is Transmembrane protein 80 (143 aa).

4 helical membrane-spanning segments follow: residues 22–42 (LLCL…LLLV), 47–67 (VFTY…LMGI), 88–108 (LAAS…FLLW), and 122–142 (PLLA…AAFV).

Its subcellular location is the membrane. It localises to the cell projection. The protein localises to the cilium. This is Transmembrane protein 80 (TMEM80) from Bos taurus (Bovine).